Consider the following 232-residue polypeptide: Protein DOG1-like 4 (232 aa).

The DOG1 domain maps to 9–229; that stretch reads EEKFLEFYES…RRWGNRRHYV (221 aa).

This chain is Protein DOG1-like 4, found in Arabidopsis thaliana (Mouse-ear cress).